A 154-amino-acid polypeptide reads, in one-letter code: Prefoldin subunit alpha (154 aa).

A disordered region spans residues 119-154; sequence EKAEVETEMEELEQQAQQMQQQQMQQMMQQQEQEDE. The span at 132 to 154 shows a compositional bias: low complexity; the sequence is QQAQQMQQQQMQQMMQQQEQEDE.

It belongs to the prefoldin subunit alpha family. In terms of assembly, heterohexamer of two alpha and four beta subunits.

It localises to the cytoplasm. Molecular chaperone capable of stabilizing a range of proteins. Seems to fulfill an ATP-independent, HSP70-like function in archaeal de novo protein folding. The protein is Prefoldin subunit alpha of Haloarcula marismortui (strain ATCC 43049 / DSM 3752 / JCM 8966 / VKM B-1809) (Halobacterium marismortui).